The sequence spans 118 residues: uncharacterized protein (118 aa).

3 consecutive transmembrane segments (helical) span residues 6–26, 43–63, and 84–104; these read ILIL…PFMV, ALSC…IHVL, and IFKV…VLVQ.

The protein belongs to the AzlD/HI_1737/HP1330 family.

The protein localises to the cell membrane. This is an uncharacterized protein from Helicobacter pylori (strain J99 / ATCC 700824) (Campylobacter pylori J99).